The chain runs to 167 residues: Probable chemoreceptor glutamine deamidase CheD (167 aa).

The protein belongs to the CheD family.

It carries out the reaction L-glutaminyl-[protein] + H2O = L-glutamyl-[protein] + NH4(+). Probably deamidates glutamine residues to glutamate on methyl-accepting chemotaxis receptors (MCPs), playing an important role in chemotaxis. The polypeptide is Probable chemoreceptor glutamine deamidase CheD (Moorella thermoacetica (strain ATCC 39073 / JCM 9320)).